Reading from the N-terminus, the 905-residue chain is DNA gyrase subunit A (905 aa).

The Topo IIA-type catalytic domain occupies 35-524 (IPDVRDGLKP…GEFDQDIEDL (490 aa)). The O-(5'-phospho-DNA)-tyrosine intermediate role is filled by Y123. Positions 551 to 557 (QKRGGKG) match the GyrA-box motif.

Belongs to the type II topoisomerase GyrA/ParC subunit family. As to quaternary structure, heterotetramer, composed of two GyrA and two GyrB chains. In the heterotetramer, GyrA contains the active site tyrosine that forms a transient covalent intermediate with DNA, while GyrB binds cofactors and catalyzes ATP hydrolysis.

It localises to the cytoplasm. The catalysed reaction is ATP-dependent breakage, passage and rejoining of double-stranded DNA.. A type II topoisomerase that negatively supercoils closed circular double-stranded (ds) DNA in an ATP-dependent manner to modulate DNA topology and maintain chromosomes in an underwound state. Negative supercoiling favors strand separation, and DNA replication, transcription, recombination and repair, all of which involve strand separation. Also able to catalyze the interconversion of other topological isomers of dsDNA rings, including catenanes and knotted rings. Type II topoisomerases break and join 2 DNA strands simultaneously in an ATP-dependent manner. This chain is DNA gyrase subunit A, found in Rickettsia typhi (strain ATCC VR-144 / Wilmington).